The following is a 292-amino-acid chain: 5,10-methylenetetrahydrofolate reductase (292 aa).

The active-site Proton donor/acceptor is glutamate 28. Threonine 59 lines the NADH pocket. The FAD site is built by tyrosine 60, alanine 62, histidine 88, arginine 118, glycine 119, aspartate 120, alanine 132, tyrosine 152, histidine 156, aspartate 165, asparagine 168, lysine 171, and lysine 172. Residue aspartate 120 participates in (6S)-5-methyl-5,6,7,8-tetrahydrofolate binding. Glutamine 183 serves as a coordination point for NADH. Residues glutamine 183, glutamine 219, and lysine 279 each contribute to the (6S)-5-methyl-5,6,7,8-tetrahydrofolate site.

Belongs to the methylenetetrahydrofolate reductase family. FAD is required as a cofactor.

It catalyses the reaction (6S)-5-methyl-5,6,7,8-tetrahydrofolate + NAD(+) = (6R)-5,10-methylene-5,6,7,8-tetrahydrofolate + NADH + H(+). It participates in one-carbon metabolism; tetrahydrofolate interconversion. Its pathway is amino-acid biosynthesis; L-methionine biosynthesis via de novo pathway. Catalyzes the NADH-dependent reduction of 5,10-methylenetetrahydrofolate to 5-methyltetrahydrofolate. Is required to provide the methyl group necessary for methionine synthetase to convert homocysteine to methionine; the methyl group is given by 5-methyltetrahydrofolate. The polypeptide is 5,10-methylenetetrahydrofolate reductase (metF) (Buchnera aphidicola subsp. Schizaphis graminum (strain Sg)).